The chain runs to 207 residues: MTMDGDSSTTDASQLGISADYIGGSHYVIQPHDDTEDSMNDHEDTNGSKESFREQDIYLPIANVARIMKNAIPQTGKIAKDAKECVQECVSEFISFITSEASERCHQEKRKTINGEDILFAMSTLGFDSYVEPLKLYLQKFREAMKGEKGIGGAVTATDGLSEELTEEAFTNQLPAGLITTDGQQQNVMVYTTSYQQISGVQQIQFS.

The a domain stretch occupies residues 1-52; that stretch reads MTMDGDSSTTDASQLGISADYIGGSHYVIQPHDDTEDSMNDHEDTNGSKESF. The disordered stretch occupies residues 27–52; the sequence is YVIQPHDDTEDSMNDHEDTNGSKESF. Positions 39-52 are enriched in basic and acidic residues; sequence MNDHEDTNGSKESF. Residues 53-142 are b domain; sequence REQDIYLPIA…PLKLYLQKFR (90 aa). A DNA-binding region spans residues 59–65; that stretch reads LPIANVA. Residues 86 to 97 form a subunit association domain (SAD) region; sequence VQECVSEFISFI. Residue lysine 140 forms a Glycyl lysine isopeptide (Lys-Gly) (interchain with G-Cter in ubiquitin) linkage. The segment at 143–207 is c domain; it reads EAMKGEKGIG…ISGVQQIQFS (65 aa).

This sequence belongs to the NFYB/HAP3 subunit family. As to quaternary structure, heterotrimeric transcription factor composed of three components, NF-YA, NF-YB and NF-YC. NF-YB and NF-YC must interact and dimerize for NF-YA association and DNA binding. Interacts with C1QBP. Post-translationally, monoubiquitination at Lys-140 plays an important role in transcriptional activation by allowing the deposition of histone H3 methylations as well as histone H2B monoubiquitination at 'Lys-121'.

The protein resides in the nucleus. Functionally, component of the sequence-specific heterotrimeric transcription factor (NF-Y) which specifically recognizes a 5'-CCAAT-3' box motif found in the promoters of its target genes. NF-Y can function as both an activator and a repressor, depending on its interacting cofactors. In Homo sapiens (Human), this protein is Nuclear transcription factor Y subunit beta (NFYB).